The chain runs to 748 residues: MLETNNHTNAWQGFKTGRWNKNIDVREFIQLNYSLYEGDDEFLEGPTKATETLWDQVMQLSKEERERGGMWDMDTKVASTITSHDAGYLDKDLEKVVGVQTEKPFKRSMQPFGGIRMAKAACEAYGYELDPETEKIFTEYRKTHNQGVFDAYSREMLNCRKAGIITGLPDAYGRGRIIGDYRRVALYGVDFLMEQKLKDFNTMSTEMSEDVIRLREELTEQYRSLQDLKELGQKYGFDISRPATNFKEAVQWLYLAYLAAIKEQNGAAMSLGRTSTFLDIYAERDLQNGDITEQEVQEIIDHFIMKLRIVKFARTPEYNELFSGDPTWVTESIGGVGIDGRPMVTKNSFRFLHSLDNLGPAPEPNLTVLWSTRLPENFKIYCAKMSIKTSSIQYENDDLMRESYGDDYGIACCVSAMKIGKQMQFFGARANLAKALLYAINGGKDEKSGKQVGPSYEGIKSDVLDYDEVFERYEKMMDWLAGVYINSLNIIHYMHDKYSYERLEMALHDTEIIRTMATGIAGLSVAADSLSAIKYAQVKPIRNEEGLVTDFEIEGDFPKYGNNDSRVDEIAVDLVERFMTKLRSHKTYRNSEHTMSVLTITSNVVYGKKTGNTPDGRKAGEPFAPGANPMHGRDQKGALSSLSSVAKIPYDCCKDGISNTFSIVPKSLGKEEADQNKNLTSMLDGYAMQHGHHLNINVFNRETLIDAMEHPEEYPQLTIRVSGYAVNFIKLTREQQLDVISRTFHESM.

The PFL domain occupies 5–618 (NNHTNAWQGF…KTGNTPDGRK (614 aa)). The active-site S-acetylcysteine intermediate is the Cys-412. Cys-413 functions as the Cysteine radical intermediate in the catalytic mechanism. The Glycine radical domain maps to 625 to 748 (PGANPMHGRD…VISRTFHESM (124 aa)). Gly-723 bears the Glycine radical mark.

This sequence belongs to the glycyl radical enzyme (GRE) family. PFL subfamily. As to quaternary structure, homodimer.

The protein localises to the cytoplasm. The enzyme catalyses formate + acetyl-CoA = pyruvate + CoA. It participates in fermentation; pyruvate fermentation; formate from pyruvate: step 1/1. In terms of biological role, catalyzes the conversion of pyruvate to formate and acetyl-CoA. The polypeptide is Formate acetyltransferase (pflB) (Staphylococcus epidermidis (strain ATCC 12228 / FDA PCI 1200)).